A 158-amino-acid polypeptide reads, in one-letter code: Ribosome-binding factor A (158 aa).

Residues 127-158 (RQGAVHAGDADPYKESAAEEPAAYEDDERRPD) form a disordered region. Residues 134-143 (GDADPYKESA) are compositionally biased toward basic and acidic residues.

This sequence belongs to the RbfA family. As to quaternary structure, monomer. Binds 30S ribosomal subunits, but not 50S ribosomal subunits or 70S ribosomes.

Its subcellular location is the cytoplasm. One of several proteins that assist in the late maturation steps of the functional core of the 30S ribosomal subunit. Associates with free 30S ribosomal subunits (but not with 30S subunits that are part of 70S ribosomes or polysomes). Required for efficient processing of 16S rRNA. May interact with the 5'-terminal helix region of 16S rRNA. The protein is Ribosome-binding factor A of Mycobacteroides abscessus (strain ATCC 19977 / DSM 44196 / CCUG 20993 / CIP 104536 / JCM 13569 / NCTC 13031 / TMC 1543 / L948) (Mycobacterium abscessus).